We begin with the raw amino-acid sequence, 140 residues long: Organic hydroperoxide resistance protein-like (140 aa).

Belongs to the OsmC/Ohr family.

The polypeptide is Organic hydroperoxide resistance protein-like (Staphylococcus aureus (strain MRSA252)).